Here is a 728-residue protein sequence, read N- to C-terminus: Catalase-peroxidase (728 aa).

The interval 1-26 (MDNPTDTAGKCPVAHGNKPRGPSNRD) is disordered. Residues 96 to 218 (WHSAGTYRIT…LGAVQMGLIY (123 aa)) constitute a cross-link (tryptophyl-tyrosyl-methioninium (Trp-Tyr) (with M-244)). Histidine 97 serves as the catalytic Proton acceptor. Positions 218–244 (YVNPEGPNGNPDPVAAARDIRETFARM) form a cross-link, tryptophyl-tyrosyl-methioninium (Tyr-Met) (with W-96). Histidine 259 contributes to the heme b binding site.

This sequence belongs to the peroxidase family. Peroxidase/catalase subfamily. In terms of assembly, homodimer or homotetramer. Heme b serves as cofactor. Post-translationally, formation of the three residue Trp-Tyr-Met cross-link is important for the catalase, but not the peroxidase activity of the enzyme.

The enzyme catalyses H2O2 + AH2 = A + 2 H2O. It carries out the reaction 2 H2O2 = O2 + 2 H2O. Its function is as follows. Bifunctional enzyme with both catalase and broad-spectrum peroxidase activity. Important for stationary phase survival. This Rhizobium etli (strain ATCC 51251 / DSM 11541 / JCM 21823 / NBRC 15573 / CFN 42) protein is Catalase-peroxidase.